Here is a 522-residue protein sequence, read N- to C-terminus: Ribonuclease Y (522 aa).

Residues tryptophan 2 to leucine 22 form a helical membrane-spanning segment. A KH domain is found at leucine 212–aspartate 278. The region spanning alanine 338–alanine 431 is the HD domain.

The protein belongs to the RNase Y family.

Its subcellular location is the cell membrane. Functionally, endoribonuclease that initiates mRNA decay. This chain is Ribonuclease Y, found in Nitratiruptor sp. (strain SB155-2).